We begin with the raw amino-acid sequence, 478 residues long: Glutamate--tRNA ligase (478 aa).

A 'HIGH' region motif is present at residues 9 to 19 (PSPTGLLHIGT). Positions 248–252 (KLSKR) match the 'KMSKS' region motif. Lys251 is a binding site for ATP.

This sequence belongs to the class-I aminoacyl-tRNA synthetase family. Glutamate--tRNA ligase type 1 subfamily. As to quaternary structure, monomer.

It localises to the cytoplasm. The catalysed reaction is tRNA(Glu) + L-glutamate + ATP = L-glutamyl-tRNA(Glu) + AMP + diphosphate. Catalyzes the attachment of glutamate to tRNA(Glu) in a two-step reaction: glutamate is first activated by ATP to form Glu-AMP and then transferred to the acceptor end of tRNA(Glu). The protein is Glutamate--tRNA ligase of Prochlorococcus marinus (strain MIT 9515).